A 247-amino-acid chain; its full sequence is Spermatogenesis-associated protein 46 (247 aa).

Residues 125–164 (QRDSCLPEDTADSVCSSSPSPENTCPREATKKSRPGPDTT) are disordered. The segment covering 137–147 (SVCSSSPSPEN) has biased composition (polar residues).

The protein localises to the nucleus membrane. Its function is as follows. Plays a role in spermiogenesis and fertilization. The polypeptide is Spermatogenesis-associated protein 46 (SPATA46) (Bos taurus (Bovine)).